A 68-amino-acid polypeptide reads, in one-letter code: Serine rich endogenous peptide 22 (68 aa).

Positions 1–25 (MNKALVWLITLLFLIFSATPNRVLA) are cleaved as a signal peptide. The short motif at 50–64 (KIGVGASNSGHSPGA) is the SCOOP motif element. Residues 56 to 58 (SNS) carry the SxS motif essential for MIK2 binding motif.

It belongs to the serine rich endogenous peptide (SCOOP) phytocytokine family. In terms of assembly, interacts with MIK2 (via extracellular leucine-rich repeat domain); this interaction triggers the formation of complex between MIK2 and the BAK1/SERK3 and SERK4 coreceptors, and subsequent BAK1 activation by phosphorylation.

The protein resides in the cell membrane. Its subcellular location is the secreted. The protein localises to the extracellular space. It is found in the apoplast. In terms of biological role, brassicaceae-specific phytocytokine (plant endogenous peptide released into the apoplast) perceived by MIK2 in a BAK1/SERK3 and SERK4 coreceptors-dependent manner, that modulates various physiological and antimicrobial processes including growth prevention and reactive oxygen species (ROS) response regulation. This is Serine rich endogenous peptide 22 from Arabidopsis thaliana (Mouse-ear cress).